We begin with the raw amino-acid sequence, 571 residues long: Protein EARLY STARVATION 1, chloroplastic (571 aa).

2 disordered regions span residues 142-162 and 215-254; these read RHSSCSSQSLPQQQRRTKDAG and GSYRGGPVHGANHIRPLQRPDSVHPQPLTSARPRRGTEHD. Low complexity predominate over residues 145-155; sequence SCSSQSLPQQQ.

This sequence belongs to the ESV1 family.

It localises to the plastid. The protein resides in the chloroplast stroma. Binds preferentially to highly ordered alpha-glucans, such as starch and crystalline maltodextrins. Involved in the organization of the starch granule matrix, thus influencing starch turnover by modulating the accessibility of starch polymers to modifying and degrading enzymes. Required for the control of starch degradation in leaves and starch distribution in nonphotosynthetic parts. Promotes gravitropic responses, negative in shoots but positive in roots, by facilitating starch granules (statoliths) formation in hypocotyls and roots columella. The sequence is that of Protein EARLY STARVATION 1, chloroplastic from Marchantia polymorpha (Common liverwort).